The following is a 1171-amino-acid chain: DNA-directed RNA polymerase subunit beta (1171 aa).

This sequence belongs to the RNA polymerase beta chain family. In terms of assembly, the RNAP catalytic core consists of 2 alpha, 1 beta, 1 beta' and 1 omega subunit. When a sigma factor is associated with the core the holoenzyme is formed, which can initiate transcription.

The enzyme catalyses RNA(n) + a ribonucleoside 5'-triphosphate = RNA(n+1) + diphosphate. Its function is as follows. DNA-dependent RNA polymerase catalyzes the transcription of DNA into RNA using the four ribonucleoside triphosphates as substrates. This is DNA-directed RNA polymerase subunit beta from Corynebacterium efficiens (strain DSM 44549 / YS-314 / AJ 12310 / JCM 11189 / NBRC 100395).